The primary structure comprises 430 residues: Asparagine--tRNA ligase (430 aa).

It belongs to the class-II aminoacyl-tRNA synthetase family. As to quaternary structure, homodimer.

The protein localises to the cytoplasm. The enzyme catalyses tRNA(Asn) + L-asparagine + ATP = L-asparaginyl-tRNA(Asn) + AMP + diphosphate + H(+). The sequence is that of Asparagine--tRNA ligase from Staphylococcus saprophyticus subsp. saprophyticus (strain ATCC 15305 / DSM 20229 / NCIMB 8711 / NCTC 7292 / S-41).